The chain runs to 299 residues: GTPase Era (299 aa).

The region spanning 4–171 (KSGFVAILGR…ISLLTDNLEE (168 aa)) is the Era-type G domain. The segment at 12–19 (GRPNVGKS) is G1. 12–19 (GRPNVGKS) is a GTP binding site. Residues 38–42 (QTTRN) are G2. Positions 59–62 (DTPG) are G3. GTP contacts are provided by residues 59-63 (DTPGI) and 121-124 (NKID). The tract at residues 121–124 (NKID) is G4. The G5 stretch occupies residues 150-152 (ISA). The region spanning 202–280 (TQQEIPHSVA…YLETWVKVKK (79 aa)) is the KH type-2 domain.

Belongs to the TRAFAC class TrmE-Era-EngA-EngB-Septin-like GTPase superfamily. Era GTPase family. In terms of assembly, monomer.

It localises to the cytoplasm. The protein localises to the cell membrane. An essential GTPase that binds both GDP and GTP, with rapid nucleotide exchange. Plays a role in 16S rRNA processing and 30S ribosomal subunit biogenesis and possibly also in cell cycle regulation and energy metabolism. The polypeptide is GTPase Era (Streptococcus uberis (strain ATCC BAA-854 / 0140J)).